Reading from the N-terminus, the 362-residue chain is UDP-N-acetylglucosamine--N-acetylmuramyl-(pentapeptide) pyrophosphoryl-undecaprenol N-acetylglucosamine transferase (362 aa).

Residues Thr-14–Gly-16, Asn-126, Arg-166, Ser-193, and Gln-294 each bind UDP-N-acetyl-alpha-D-glucosamine.

Belongs to the glycosyltransferase 28 family. MurG subfamily.

It localises to the cell inner membrane. The enzyme catalyses di-trans,octa-cis-undecaprenyl diphospho-N-acetyl-alpha-D-muramoyl-L-alanyl-D-glutamyl-meso-2,6-diaminopimeloyl-D-alanyl-D-alanine + UDP-N-acetyl-alpha-D-glucosamine = di-trans,octa-cis-undecaprenyl diphospho-[N-acetyl-alpha-D-glucosaminyl-(1-&gt;4)]-N-acetyl-alpha-D-muramoyl-L-alanyl-D-glutamyl-meso-2,6-diaminopimeloyl-D-alanyl-D-alanine + UDP + H(+). It functions in the pathway cell wall biogenesis; peptidoglycan biosynthesis. Functionally, cell wall formation. Catalyzes the transfer of a GlcNAc subunit on undecaprenyl-pyrophosphoryl-MurNAc-pentapeptide (lipid intermediate I) to form undecaprenyl-pyrophosphoryl-MurNAc-(pentapeptide)GlcNAc (lipid intermediate II). The sequence is that of UDP-N-acetylglucosamine--N-acetylmuramyl-(pentapeptide) pyrophosphoryl-undecaprenol N-acetylglucosamine transferase from Paracoccus denitrificans (strain Pd 1222).